A 61-amino-acid chain; its full sequence is Probable tautomerase BH3814 (61 aa).

Catalysis depends on proline 2, which acts as the Proton acceptor; via imino nitrogen.

This sequence belongs to the 4-oxalocrotonate tautomerase family.

In Halalkalibacterium halodurans (strain ATCC BAA-125 / DSM 18197 / FERM 7344 / JCM 9153 / C-125) (Bacillus halodurans), this protein is Probable tautomerase BH3814.